We begin with the raw amino-acid sequence, 275 residues long: MADFLAPKSNTHATISSRFQRVQAEGRLALMPFLMAGDPDLETTAEVLLSLEQSGADMIELGIPYSDPLADGPVIQAAASRALASGTTPARVLQMLIDLRGKLSIPVILFTYTNPLFNRGMERFCDEAAEAGVAGLVVPDLPLEEAERLSPLASARGLDLVLLVAPTTPAERMARIAESSRGFTYLVSVTGVTGERSVMEDRVQSLVQQLKLSGSNPVAVGFGISGPQQVRQVRSWGADGAIVGSALVKRMAAAAPGLVAQEAGLFCKELRNAAG.

Catalysis depends on proton acceptor residues Glu-60 and Asp-71.

Belongs to the TrpA family. In terms of assembly, tetramer of two alpha and two beta chains.

The catalysed reaction is (1S,2R)-1-C-(indol-3-yl)glycerol 3-phosphate + L-serine = D-glyceraldehyde 3-phosphate + L-tryptophan + H2O. Its pathway is amino-acid biosynthesis; L-tryptophan biosynthesis; L-tryptophan from chorismate: step 5/5. Its function is as follows. The alpha subunit is responsible for the aldol cleavage of indoleglycerol phosphate to indole and glyceraldehyde 3-phosphate. The chain is Tryptophan synthase alpha chain from Prochlorococcus marinus (strain MIT 9313).